Reading from the N-terminus, the 565-residue chain is Sulfite reductase [NADPH] hemoprotein beta-component (565 aa).

The [4Fe-4S] cluster site is built by cysteine 429, cysteine 435, cysteine 474, and cysteine 478. Cysteine 478 is a siroheme binding site.

It belongs to the nitrite and sulfite reductase 4Fe-4S domain family. As to quaternary structure, alpha(8)-beta(8). The alpha component is a flavoprotein, the beta component is a hemoprotein. Requires siroheme as cofactor. The cofactor is [4Fe-4S] cluster.

The enzyme catalyses hydrogen sulfide + 3 NADP(+) + 3 H2O = sulfite + 3 NADPH + 4 H(+). It functions in the pathway sulfur metabolism; hydrogen sulfide biosynthesis; hydrogen sulfide from sulfite (NADPH route): step 1/1. In terms of biological role, component of the sulfite reductase complex that catalyzes the 6-electron reduction of sulfite to sulfide. This is one of several activities required for the biosynthesis of L-cysteine from sulfate. The polypeptide is Sulfite reductase [NADPH] hemoprotein beta-component (Shewanella piezotolerans (strain WP3 / JCM 13877)).